A 218-amino-acid chain; its full sequence is DNA endonuclease I-CeuI (218 aa).

Gly-65 and Glu-66 together coordinate Mg(2+). The tract at residues 71–75 (ISTKK) is interaction with DNA. Asp-86 serves as a coordination point for Mg(2+). 3 interaction with DNA regions span residues 90 to 94 (NVTQH), 114 to 116 (RHK), and 191 to 199 (KQQGQSNEG).

The protein belongs to the LAGLIDADG endonuclease family. Homodimer. Requires Mg(2+) as cofactor.

The protein resides in the plastid. It is found in the chloroplast. Its function is as follows. Endonuclease involved in intron homing. Recognizes a degenerate sequence of 17-19 bp to produce a staggered cut 5 bp downstream from the CeLSU.5 intron insertion site. The chain is DNA endonuclease I-CeuI from Chlamydomonas moewusii (Chlamydomonas eugametos).